Here is a 204-residue protein sequence, read N- to C-terminus: Probable UMP-CMP kinase 1 (204 aa).

31–36 (GSGKGT) contributes to the ATP binding site. The NMP stretch occupies residues 51-80 (SAGDLLRAEIKSGSEFGAMIQSMIAEGRIV). A ribonucleoside 5'-phosphate is bound by residues R57, 78-80 (RIV), and 105-108 (GFPR). A CMP-binding site is contributed by N112. Residues 143–151 (SRNQGREDD) are LID. Position 144 (R144) interacts with ATP. The a ribonucleoside 5'-phosphate site is built by R148 and R159. K187 contributes to the ATP binding site.

Belongs to the adenylate kinase family. UMP-CMP kinase subfamily. In terms of assembly, monomer. Mg(2+) is required as a cofactor.

It localises to the cytoplasm. The protein localises to the nucleus. The catalysed reaction is CMP + ATP = CDP + ADP. It catalyses the reaction dCMP + ATP = dCDP + ADP. It carries out the reaction UMP + ATP = UDP + ADP. Catalyzes the phosphorylation of pyrimidine nucleoside monophosphates at the expense of ATP. Plays an important role in de novo pyrimidine nucleotide biosynthesis. Has preference for UMP and CMP as phosphate acceptors. This is Probable UMP-CMP kinase 1 (UMK1) from Arabidopsis thaliana (Mouse-ear cress).